The primary structure comprises 258 residues: Snake venom serine protease 3 (258 aa).

The first 18 residues, 1–18 (MVLIRVLANLLILQLSYA), serve as a signal peptide directing secretion. A propeptide spanning residues 19–24 (QKSSEL) is cleaved from the precursor. In terms of domain architecture, Peptidase S1 spans 25–249 (IIGGHPCNIN…YTDWIQSIIA (225 aa)). 6 cysteine pairs are disulfide-bonded: C31-C163, C50-C66, C98-C256, C142-C210, C174-C189, and C200-C225. N-linked (GlcNAc...) asparagine glycosylation occurs at N44. Catalysis depends on charge relay system residues H65 and D110. S204 (charge relay system) is an active-site residue. N-linked (GlcNAc...) asparagine glycosylation occurs at N239.

It belongs to the peptidase S1 family. Snake venom subfamily. As to quaternary structure, monomer. Expressed by the venom gland.

It localises to the secreted. Its function is as follows. Snake venom serine protease that may act in the hemostasis system of the prey. This Protobothrops jerdonii (Jerdon's pitviper) protein is Snake venom serine protease 3.